A 121-amino-acid chain; its full sequence is Putative viral protein-binding protein C1 (121 aa).

The tract at residues 21–57 (PWDRTRGHPDVPWRNLTSSPTRPLAQPAGSCMPAEPS) is disordered.

Interacts with core protein of hepatitis B virus.

This chain is Putative viral protein-binding protein C1, found in Homo sapiens (Human).